Reading from the N-terminus, the 99-residue chain is Small ribosomal subunit protein bS21 (99 aa).

The disordered stretch occupies residues Lys60–Arg99.

This sequence belongs to the bacterial ribosomal protein bS21 family.

This chain is Small ribosomal subunit protein bS21, found in Rhodopseudomonas palustris (strain BisA53).